The primary structure comprises 117 residues: UPF0642 protein C32H8.05 (117 aa).

Residues 39 to 117 (DQVNDLTKSS…SNFSKFLKKK (79 aa)) form a disordered region. The segment covering 93–106 (KWAKKHLKKGKRAK) has biased composition (basic residues). The span at 107 to 117 (NSNFSKFLKKK) shows a compositional bias: low complexity.

Belongs to the UPF0642 family.

It is found in the nucleus. The protein resides in the nucleolus. This Schizosaccharomyces pombe (strain 972 / ATCC 24843) (Fission yeast) protein is UPF0642 protein C32H8.05.